A 303-amino-acid chain; its full sequence is Major fimbrium anchoring subunit FimB (303 aa).

An N-terminal signal peptide occupies residues 1-22 (MNDAKKYIVSVLILLVAGMFGG). Residue C23 is the site of N-palmitoyl cysteine attachment. C23 is lipidated: S-diacylglycerol cysteine.

Belongs to the bacteroidetes fimbrillin superfamily. FimB/Mfa2 family. In terms of assembly, fimB is not part of the fimbrium itself, but anchors the fimbrium in the outer membrane. Linear, head-to-tail oligomerization of fimbrial subunits mediates assembly of the fimbrium stalk, while the minor components FimC, FimD and FimE probably form the fimbrium tip. The anchoring subunit FimB limits fimbrium length and is important for solid fimbrium attachment to the outer membrane. In its absence, the major fimbriae become very long and are easily detached from the membrane.

The protein resides in the cell outer membrane. In terms of biological role, anchoring subunit of the major fimbriae. Regulates fimbrial length. These filamentous pili are attached to the cell surface; they mediate biofilm formation, adhesion onto host cells and onto other bacteria that are part of the oral microbiome. Fimbriae of P.gingivalis are major virulence factors. In Porphyromonas gingivalis (strain ATCC 33277 / DSM 20709 / CIP 103683 / JCM 12257 / NCTC 11834 / 2561), this protein is Major fimbrium anchoring subunit FimB.